The sequence spans 195 residues: 3-isopropylmalate dehydratase small subunit (195 aa).

It belongs to the LeuD family. LeuD type 1 subfamily. As to quaternary structure, heterodimer of LeuC and LeuD.

It catalyses the reaction (2R,3S)-3-isopropylmalate = (2S)-2-isopropylmalate. It functions in the pathway amino-acid biosynthesis; L-leucine biosynthesis; L-leucine from 3-methyl-2-oxobutanoate: step 2/4. In terms of biological role, catalyzes the isomerization between 2-isopropylmalate and 3-isopropylmalate, via the formation of 2-isopropylmaleate. The sequence is that of 3-isopropylmalate dehydratase small subunit from Salinispora tropica (strain ATCC BAA-916 / DSM 44818 / JCM 13857 / NBRC 105044 / CNB-440).